We begin with the raw amino-acid sequence, 233 residues long: Glucosamine-6-phosphate deaminase (233 aa).

Asp-62 serves as the catalytic Proton acceptor; for enolization step. Asn-128 (for ring-opening step) is an active-site residue. The Proton acceptor; for ring-opening step role is filled by His-130. Glu-135 functions as the For ring-opening step in the catalytic mechanism.

Belongs to the glucosamine/galactosamine-6-phosphate isomerase family. NagB subfamily.

The catalysed reaction is alpha-D-glucosamine 6-phosphate + H2O = beta-D-fructose 6-phosphate + NH4(+). Its pathway is amino-sugar metabolism; N-acetylneuraminate degradation; D-fructose 6-phosphate from N-acetylneuraminate: step 5/5. In terms of biological role, catalyzes the reversible isomerization-deamination of glucosamine 6-phosphate (GlcN6P) to form fructose 6-phosphate (Fru6P) and ammonium ion. The sequence is that of Glucosamine-6-phosphate deaminase from Streptococcus agalactiae serotype Ia (strain ATCC 27591 / A909 / CDC SS700).